The chain runs to 438 residues: DNA primase DnaG (438 aa).

In terms of domain architecture, Toprim spans Asp-169–Tyr-243. Residues Glu-175, Asp-217, and Asp-219 each coordinate Mg(2+).

The protein belongs to the archaeal DnaG primase family. As to quaternary structure, forms a ternary complex with MCM helicase and DNA. Mg(2+) is required as a cofactor.

It carries out the reaction ssDNA + n NTP = ssDNA/pppN(pN)n-1 hybrid + (n-1) diphosphate.. Functionally, RNA polymerase that catalyzes the synthesis of short RNA molecules used as primers for DNA polymerase during DNA replication. The polypeptide is DNA primase DnaG (Methanococcus maripaludis (strain C5 / ATCC BAA-1333)).